Here is a 201-residue protein sequence, read N- to C-terminus: Potassium-transporting ATPase KdpC subunit (201 aa).

The helical transmembrane segment at 7 to 27 (PAIVLLLVLTAITGLAYPLAM) threads the bilayer.

It belongs to the KdpC family. In terms of assembly, the system is composed of three essential subunits: KdpA, KdpB and KdpC.

The protein localises to the cell inner membrane. Functionally, part of the high-affinity ATP-driven potassium transport (or Kdp) system, which catalyzes the hydrolysis of ATP coupled with the electrogenic transport of potassium into the cytoplasm. This subunit acts as a catalytic chaperone that increases the ATP-binding affinity of the ATP-hydrolyzing subunit KdpB by the formation of a transient KdpB/KdpC/ATP ternary complex. The polypeptide is Potassium-transporting ATPase KdpC subunit (Bradyrhizobium diazoefficiens (strain JCM 10833 / BCRC 13528 / IAM 13628 / NBRC 14792 / USDA 110)).